A 141-amino-acid polypeptide reads, in one-letter code: Hemoglobin subunit alpha-1/2 (141 aa).

The Globin domain maps to 1-141 (VLSPTDKTNV…VSTVLTSKYR (141 aa)). Phosphoserine is present on S3. At K7 the chain carries N6-succinyllysine. T8 is subject to Phosphothreonine. K11 is modified (N6-succinyllysine). K16 carries the N6-acetyllysine; alternate modification. The residue at position 16 (K16) is an N6-succinyllysine; alternate. Y24 carries the phosphotyrosine modification. Position 40 is an N6-succinyllysine (K40). Phosphoserine is present on S49. H58 is an O2 binding site. H87 provides a ligand contact to heme b. S102 bears the Phosphoserine mark. Residue T108 is modified to Phosphothreonine. S124 carries the post-translational modification Phosphoserine. A phosphothreonine mark is found at T134 and T137. S138 carries the post-translational modification Phosphoserine.

This sequence belongs to the globin family. Heterotetramer of two alpha chains and two beta chains. As to expression, red blood cells.

Involved in oxygen transport from the lung to the various peripheral tissues. The sequence is that of Hemoglobin subunit alpha-1/2 from Tapirus terrestris (Lowland tapir).